A 456-amino-acid polypeptide reads, in one-letter code: Glycerol-3-phosphate acyltransferase 4 (456 aa).

Positions 1-37 (MFLLLPFDSLIVNLLGISLTVLFTLLLVFIIVPAIFG) are cleaved as a signal peptide. 2 helical membrane passes run 156-176 (ISLRLTILWGLGVLIRYCFLL) and 180-200 (IALAFTGIGLLVVGTTMVGYL). Asn247 is a glycosylation site (N-linked (GlcNAc...) asparagine). An HXXXXD motif motif is present at residues 248 to 253 (HTSPID). Residues Asn327, Asn328, and Asn362 are each glycosylated (N-linked (GlcNAc...) asparagine).

The protein belongs to the 1-acyl-sn-glycerol-3-phosphate acyltransferase family. Highly expressed in testis.

It localises to the endoplasmic reticulum membrane. It carries out the reaction sn-glycerol 3-phosphate + an acyl-CoA = a 1-acyl-sn-glycero-3-phosphate + CoA. The enzyme catalyses dodecanoyl-CoA + sn-glycerol 3-phosphate = 1-dodecanoyl-sn-glycerol 3-phosphate + CoA. The catalysed reaction is sn-glycerol 3-phosphate + hexadecanoyl-CoA = 1-hexadecanoyl-sn-glycero-3-phosphate + CoA. It catalyses the reaction sn-glycerol 3-phosphate + octadecanoyl-CoA = 1-octadecanoyl-sn-glycero-3-phosphate + CoA. It carries out the reaction sn-glycerol 3-phosphate + (9Z)-octadecenoyl-CoA = 1-(9Z-octadecenoyl)-sn-glycero-3-phosphate + CoA. The enzyme catalyses (9Z,12Z)-octadecadienoyl-CoA + sn-glycerol 3-phosphate = 1-(9Z,12Z)-octadecadienoyl-sn-glycero-3-phosphate + CoA. Its pathway is phospholipid metabolism; CDP-diacylglycerol biosynthesis; CDP-diacylglycerol from sn-glycerol 3-phosphate: step 1/3. In terms of biological role, converts glycerol-3-phosphate to 1-acyl-sn-glycerol-3-phosphate (lysophosphatidic acid or LPA) by incorporating an acyl moiety at the sn-1 position of the glycerol backbone. Active against both saturated and unsaturated long-chain fatty acyl-CoAs. Protects cells against lipotoxicity. The protein is Glycerol-3-phosphate acyltransferase 4 of Mus musculus (Mouse).